A 238-amino-acid chain; its full sequence is 2,3,4,5-tetrahydropyridine-2,6-dicarboxylate N-acetyltransferase (238 aa).

The protein belongs to the transferase hexapeptide repeat family. DapH subfamily.

The catalysed reaction is (S)-2,3,4,5-tetrahydrodipicolinate + acetyl-CoA + H2O = L-2-acetamido-6-oxoheptanedioate + CoA. It participates in amino-acid biosynthesis; L-lysine biosynthesis via DAP pathway; LL-2,6-diaminopimelate from (S)-tetrahydrodipicolinate (acetylase route): step 1/3. Functionally, catalyzes the transfer of an acetyl group from acetyl-CoA to tetrahydrodipicolinate. The sequence is that of 2,3,4,5-tetrahydropyridine-2,6-dicarboxylate N-acetyltransferase from Thermotoga neapolitana (strain ATCC 49049 / DSM 4359 / NBRC 107923 / NS-E).